The sequence spans 365 residues: 3-dehydroquinate synthase (365 aa).

NAD(+) is bound by residues 107–111, 131–132, lysine 144, and lysine 153; these read GVIGD and TT. Glutamate 186, histidine 251, and histidine 268 together coordinate Zn(2+).

It belongs to the sugar phosphate cyclases superfamily. Dehydroquinate synthase family. It depends on Co(2+) as a cofactor. Zn(2+) is required as a cofactor. The cofactor is NAD(+).

Its subcellular location is the cytoplasm. The catalysed reaction is 7-phospho-2-dehydro-3-deoxy-D-arabino-heptonate = 3-dehydroquinate + phosphate. It functions in the pathway metabolic intermediate biosynthesis; chorismate biosynthesis; chorismate from D-erythrose 4-phosphate and phosphoenolpyruvate: step 2/7. In terms of biological role, catalyzes the conversion of 3-deoxy-D-arabino-heptulosonate 7-phosphate (DAHP) to dehydroquinate (DHQ). The sequence is that of 3-dehydroquinate synthase from Picosynechococcus sp. (strain ATCC 27264 / PCC 7002 / PR-6) (Agmenellum quadruplicatum).